A 190-amino-acid polypeptide reads, in one-letter code: GTP cyclohydrolase 1 1 (190 aa).

The protein belongs to the GTP cyclohydrolase I family. Homomer.

The catalysed reaction is GTP + H2O = 7,8-dihydroneopterin 3'-triphosphate + formate + H(+). It functions in the pathway cofactor biosynthesis; 7,8-dihydroneopterin triphosphate biosynthesis; 7,8-dihydroneopterin triphosphate from GTP: step 1/1. In Pseudomonas putida (strain ATCC 47054 / DSM 6125 / CFBP 8728 / NCIMB 11950 / KT2440), this protein is GTP cyclohydrolase 1 1.